Reading from the N-terminus, the 207-residue chain is Probable molybdenum cofactor guanylyltransferase (207 aa).

Residues 9-11 (LAG), Lys21, and Asp97 each bind GTP. Asp97 serves as a coordination point for Mg(2+).

Belongs to the MobA family. Requires Mg(2+) as cofactor.

The protein resides in the cytoplasm. It catalyses the reaction Mo-molybdopterin + GTP + H(+) = Mo-molybdopterin guanine dinucleotide + diphosphate. Functionally, transfers a GMP moiety from GTP to Mo-molybdopterin (Mo-MPT) cofactor (Moco or molybdenum cofactor) to form Mo-molybdopterin guanine dinucleotide (Mo-MGD) cofactor. The polypeptide is Probable molybdenum cofactor guanylyltransferase (Trichormus variabilis (strain ATCC 29413 / PCC 7937) (Anabaena variabilis)).